Here is a 261-residue protein sequence, read N- to C-terminus: Glucosamine-6-phosphate deaminase (261 aa).

Asp67 serves as the catalytic Proton acceptor; for enolization step. The For ring-opening step role is filled by Asn135. His137 acts as the Proton acceptor; for ring-opening step in catalysis. The For ring-opening step role is filled by Glu142.

Belongs to the glucosamine/galactosamine-6-phosphate isomerase family. NagB subfamily. As to quaternary structure, homohexamer.

It carries out the reaction alpha-D-glucosamine 6-phosphate + H2O = beta-D-fructose 6-phosphate + NH4(+). The protein operates within amino-sugar metabolism; N-acetylneuraminate degradation; D-fructose 6-phosphate from N-acetylneuraminate: step 5/5. Catalyzes the reversible isomerization-deamination of glucosamine 6-phosphate (GlcN6P) to form fructose 6-phosphate (Fru6P) and ammonium ion. The protein is Glucosamine-6-phosphate deaminase of Hahella chejuensis (strain KCTC 2396).